Reading from the N-terminus, the 351-residue chain is Protein disulfide isomerase CRELD2 (351 aa).

A signal peptide spans 1-21 (MRPPAPAVLGLLLLLLPTGEA). The short motif at 28–31 (CKRC) is the CXXC element. 4 disulfides stabilise this stretch: Cys-28–Cys-31, Cys-137–Cys-151, Cys-145–Cys-163, and Cys-165–Cys-174. One can recognise an EGF-like 1 domain in the interval 133–175 (DCLACQGGSERPCSGNGHCVGDGTREGDGSCQCHLGYQGPLCS). The stretch at 190 to 237 (HSICSACDEACKTCVGPTNRDCGQCEVGWVRQDDACVDVDECAAEPPP) is one FU 1 repeat. N-linked (GlcNAc...) asparagine glycosylation is present at Asn-248. One copy of the FU 2 repeat lies at 250–297 (SFVCEECDPTCMGCTGKGPTQCRECIAGYSKESGQCEDIDECSLAEKP). The short motif at 260–263 (CMGC) is the CXXC element. Cystine bridges form between Cys-260–Cys-263, Cys-291–Cys-305, Cys-298–Cys-314, and Cys-316–Cys-327. Positions 287–328 (DIDECSLAEKPCLRDNENCYNTPGSFVCVCPDGFEEAEDTCV) constitute an EGF-like 2; calcium-binding domain. The segment at 329–351 (QTRPAGAEATEASPTQPPSREDL) is disordered.

Belongs to the CRELD family. As to quaternary structure, interacts with CHRNA4. Component of a complex containing at least CRELD2, MANF, MATN3 and PDIA4.

Its subcellular location is the endoplasmic reticulum. The enzyme catalyses Catalyzes the rearrangement of -S-S- bonds in proteins.. Its function is as follows. Protein disulfide isomerase. Might play a role in the unfolded protein response. May regulate transport of alpha4-beta2 neuronal acetylcholine receptor. This chain is Protein disulfide isomerase CRELD2 (CRELD2), found in Bos taurus (Bovine).